Reading from the N-terminus, the 202-residue chain is uncharacterized protein (202 aa).

The region spanning 14-74 is the HTH tetR-type domain; sequence NAKTERILDV…AMADRYFQRC (61 aa).

This is an uncharacterized protein from Xanthobacter autotrophicus.